A 682-amino-acid chain; its full sequence is Potassium-transporting ATPase ATP-binding subunit (682 aa).

A run of 4 helical transmembrane segments spans residues 35 to 55 (VMFIVWVGSLLTTLLAIAMAG), 62 to 82 (ATFTAAVSIWLWFTVLFANFA), 219 to 239 (IALTILLIALTLVFLLATATI), and 254 to 274 (VLVALLVCLIPTTIGGLLSAI). Aspartate 307 functions as the 4-aspartylphosphate intermediate in the catalytic mechanism. Residues aspartate 344, glutamate 348, 377–384 (FTAQTRMS), and lysine 395 each bind ATP. Mg(2+) contacts are provided by aspartate 518 and aspartate 522. A run of 3 helical transmembrane segments spans residues 588–608 (FAIIPAAFAAVYPQLAMLNVM), 616–636 (AILSAVIFNALIIVFLIPLAL), and 656–676 (IYGLGGLLVPFIGIKAIDLLL).

This sequence belongs to the cation transport ATPase (P-type) (TC 3.A.3) family. Type IA subfamily. The system is composed of three essential subunits: KdpA, KdpB and KdpC.

The protein localises to the cell inner membrane. It catalyses the reaction K(+)(out) + ATP + H2O = K(+)(in) + ADP + phosphate + H(+). Part of the high-affinity ATP-driven potassium transport (or Kdp) system, which catalyzes the hydrolysis of ATP coupled with the electrogenic transport of potassium into the cytoplasm. This subunit is responsible for energy coupling to the transport system and for the release of the potassium ions to the cytoplasm. The polypeptide is Potassium-transporting ATPase ATP-binding subunit (Klebsiella pneumoniae subsp. pneumoniae (strain ATCC 700721 / MGH 78578)).